The chain runs to 522 residues: MYTPIPANTPAPTAPTSSMTSNSSSASNANTTSSSGINPRNRASGTPSNERARPASGISSFLNTFGIRQNSQTASSSAAPDQRLFGTTPSNSHMSVAMESIDTAPQQQEPRLHHPIQMPLSAQFHVHRNYQLPISISLTAPTTTDHQQSSAHNFEGNNVGNVQESLNQRQPNGTNNTTTSIISMAPAATTRNIVGGADGSTIVNNSQEMYKNLRHLIYAANQPNGTEILHLDLPATSAEESNNMFNVDEVTLKQRKDKHGLFSIRLTPFIDSSSTTNQGLFFEPIIRKAGPGSQLVIGRYTERVRDAISKIPEQYHPVVFKSKVVSRTHGCFKVDSQGNWYIKDVKSSSGTFLNHQRLSPASSLSKDTPLRDGDILQLGMDFRGGTEEIYRCVRMRIELNRSWKLKANSFNKEALQRLQNLQKLTTGVEEEDCSICLCKIKPCQAIFISPCAHSWHFRCVRRLVMLSYPQFVCPNCRSSCDLEASFESSDEEDESDVESEGDQLVDQLSVLMETSKDVDSHP.

2 disordered regions span residues 1–56 and 69–92; these read MYTP…RPAS and QNSQTASSSAAPDQRLFGTTPSNS. Over residues 14-35 the composition is skewed to low complexity; it reads APTSSMTSNSSSASNANTTSSS. Residues 36 to 49 show a composition bias toward polar residues; it reads GINPRNRASGTPSN. Position 206 is a phosphoserine (S206). Glycyl lysine isopeptide (Lys-Gly) (interchain with G-Cter in ubiquitin) cross-links involve residues K211, K256, K258, K288, K310, K333, K343, K346, K366, K406, K412, and K423. The region spanning 295–358 is the FHA domain; the sequence is LVIGRYTERV…SGTFLNHQRL (64 aa). The RING-type; atypical zinc-finger motif lies at 433 to 477; that stretch reads CSICLCKIKPCQAIFISPCAHSWHFRCVRRLVMLSYPQFVCPNCR.

The protein belongs to the DMA1 family. UBC4-dependent autoubiquitination occurs at Lys-211, Lys-258, Lys-288, Lys-310, Lys-333, Lys-343, Lys-346, Lys-366, Lys-406, Lys-412 and Lys-423. UBC13/MMS2-dependent autoubiquitination occurs at Lys-258, Lys-310, Lys-346 and Lys-366. Lys-211, Lys-256, Lys-288, Lys-310, Lys-343, Lys-258, Lys-366 and Lys-412 are also ubiquitinated in trans by DMA1 E3 ligase in association with UBC4.

The protein localises to the cytoplasm. The enzyme catalyses S-ubiquitinyl-[E2 ubiquitin-conjugating enzyme]-L-cysteine + [acceptor protein]-L-lysine = [E2 ubiquitin-conjugating enzyme]-L-cysteine + N(6)-ubiquitinyl-[acceptor protein]-L-lysine.. Functionally, E3 ubiquitin-protein ligase which functions in cell cycle retarding in conjunction with the UBC4 and UBC13/MMS2 complex, 2 E2 ubiquitin conjugating enzymes. Involved in nutritional control of the cell cycle. Required for proper spindle positioning, likely regulating septin ring deposition at the bud neck. The polypeptide is E3 ubiquitin-protein ligase DMA2 (DMA2) (Saccharomyces cerevisiae (strain YJM789) (Baker's yeast)).